The following is a 227-amino-acid chain: MAGVGVGPLQGMVRFGLLVLTVCAACARGLYFHIGETEKRCFIEEIPDETMVIGNYRTQMWDKQKEVFLPSTPGLGMHVEVKDPDGKVVLSRQYGSEGRFTFTSHTPGDHQICLHSNSTRMALFAGGKLRVHLDIQVGEHANNYPEIAAKDKLTELQLRARQLLDQVEQIQKEQDYQRYREERFRLTSESTNQRVLWWSIAQTVILILTGIWQMRHLKSFFEAKKLV.

Positions 1 to 29 (MAGVGVGPLQGMVRFGLLVLTVCAACARG) are cleaved as a signal peptide. Residues 30–194 (LYFHIGETEK…RLTSESTNQR (165 aa)) lie on the Lumenal side of the membrane. The GOLD domain occupies 39–137 (KRCFIEEIPD…KLRVHLDIQV (99 aa)). An N-linked (GlcNAc...) asparagine glycan is attached at Asn117. Positions 147–176 (IAAKDKLTELQLRARQLLDQVEQIQKEQDY) form a coiled coil. A helical membrane pass occupies residues 195–212 (VLWWSIAQTVILILTGIW). Residues 213-227 (QMRHLKSFFEAKKLV) lie on the Cytoplasmic side of the membrane. The short motif at 220–221 (FF) is the COPII vesicle coat-binding element. Positions 220-227 (FFEAKKLV) match the COPI vesicle coat-binding motif.

It belongs to the EMP24/GP25L family.

The protein resides in the endoplasmic reticulum membrane. In terms of biological role, involved in vesicular protein trafficking, mainly in the early secretory pathway. Involved in the maintenance of the Golgi apparatus. Appears to play a role in the biosynthesis of secreted cargo including processing. Involved in endoplasmic reticulum stress response. May play a role in the regulation of heat-shock response and apoptosis. This Mus musculus (Mouse) protein is Transmembrane emp24 domain-containing protein 4 (Tmed4).